A 404-amino-acid chain; its full sequence is MAENGDNEKMAALEAKICHQIEYYFGDFNLPRDKFLKEQIKLDEGWVPLEIMIKFNRLNRLTTDFNVIVEALSKSKAELMEISEDKTKIRRSPSKPLPEVTDEYKNDVKNRSVYIKGFPTDAALDDIKEWLEDKGQVLNIQMRRTLHKAFKGSIFAVFDSIESAKKFVETPGQKYKDTDLLILFKEDYFTKKNEERKQNKMEAKLRAKQEQEEKQKLAENAEMKSLEEKIGCLLKFSGDLDDQTCREDLHTLFSNHGEIKWIHFVRGAKEGIILFKEKAKEALDKAKEANNGNLQLRNKEVTWEVLEGDVEKEALKKIIEDQQESLNKWKSKGRRFKGKGKGNKAAQAGSAKGKVQFQGKKTKFDSDDERDENGASRAVKRAREETDKEPPSKQQKTENGAGDQ.

In terms of domain architecture, HTH La-type RNA-binding spans 7–99; that stretch reads NEKMAALEAK…RRSPSKPLPE (93 aa). S92 and S94 each carry phosphoserine. Residues 111 to 187 enclose the RRM domain; it reads RSVYIKGFPT…TDLLILFKED (77 aa). Position 116 is an N6-acetyllysine (K116). T120 is subject to Phosphothreonine. K128 bears the N6-acetyllysine mark. Position 225 is a phosphoserine (S225). The region spanning 227 to 348 is the xRRM domain; it reads EEKIGCLLKF…KGKGNKAAQA (122 aa). K328 and K341 each carry N6-acetyllysine. Residues 329–342 are compositionally biased toward basic residues; that stretch reads WKSKGRRFKGKGKG. Residues 329–404 are disordered; it reads WKSKGRRFKG…QKTENGAGDQ (76 aa). Positions 343–354 are enriched in low complexity; that stretch reads NKAAQAGSAKGK. N6-acetyllysine is present on K360. T362 bears the Phosphothreonine mark. S366 is subject to Phosphoserine. Residues 381–391 show a composition bias toward basic and acidic residues; sequence RAREETDKEPP.

In terms of assembly, interacts with DDX15. May interact with RUFY1. Post-translationally, phosphorylated in the C-terminal part of the protein.

The protein localises to the nucleus. Its function is as follows. Binds to the 3' poly(U) terminus of nascent RNA polymerase III transcripts, protecting them from exonuclease digestion and facilitating their folding and maturation. This chain is Lupus La protein homolog (SSB), found in Bos taurus (Bovine).